The following is a 139-amino-acid chain: Small ribosomal subunit protein uS12 (139 aa).

The tract at residues 1–21 (MSTVSQLIKKRRSSKTSKTKA) is disordered. The segment covering 8-18 (IKKRRSSKTSK) has biased composition (basic residues).

It belongs to the universal ribosomal protein uS12 family. In terms of assembly, part of the 30S ribosomal subunit. Contacts proteins S8 and S17. May interact with IF1 in the 30S initiation complex.

With S4 and S5 plays an important role in translational accuracy. In terms of biological role, interacts with and stabilizes bases of the 16S rRNA that are involved in tRNA selection in the A site and with the mRNA backbone. Located at the interface of the 30S and 50S subunits, it traverses the body of the 30S subunit contacting proteins on the other side and probably holding the rRNA structure together. The combined cluster of proteins S8, S12 and S17 appears to hold together the shoulder and platform of the 30S subunit. The sequence is that of Small ribosomal subunit protein uS12 from Onion yellows phytoplasma (strain OY-M).